Here is a 156-residue protein sequence, read N- to C-terminus: Glutamine--fructose-6-phosphate aminotransferase [isomerizing] (156 aa).

The 143-residue stretch at 4 to 146 (MAHHIVPARD…VLKGTDVDQP (143 aa)) folds into the SIS domain. Lys-151 serves as the catalytic For Fru-6P isomerization activity.

Homodimer.

It is found in the cytoplasm. The enzyme catalyses D-fructose 6-phosphate + L-glutamine = D-glucosamine 6-phosphate + L-glutamate. In terms of biological role, catalyzes the first step in hexosamine metabolism, converting fructose-6P into glucosamine-6P using glutamine as a nitrogen source. This chain is Glutamine--fructose-6-phosphate aminotransferase [isomerizing] (glmS), found in Sphingobium yanoikuyae (Sphingomonas yanoikuyae).